A 250-amino-acid chain; its full sequence is Aminoglycoside 3'-phosphotransferase (250 aa).

Aspartate 178 (proton acceptor) is an active-site residue.

Belongs to the aminoglycoside phosphotransferase family.

It carries out the reaction kanamycin A + ATP = kanamycin 3'-phosphate + ADP + H(+). Its function is as follows. Resistance to kanamycin and structurally-related aminoglycosides, including amikacin. This Campylobacter jejuni protein is Aminoglycoside 3'-phosphotransferase (aphA-7).